The primary structure comprises 404 residues: Rhomboid-related protein 3 (404 aa).

2 EF-hand domains span residues 34–69 (APED…HSSK) and 70–105 (LDPH…KRSN). The next 7 helical transmembrane spans lie at 164 to 184 (WFMI…GVLL), 227 to 247 (LGLN…VHGA), 250 to 270 (IGLV…VADM), 274 to 294 (VVGS…NIVM), 305 to 324 (LLRM…RAVW), 338 to 358 (PSFV…VVVL), and 371 to 391 (WWIF…WNIF). Serine 278 serves as the catalytic Nucleophile. The active site involves histidine 343.

It belongs to the peptidase S54 family.

Its subcellular location is the membrane. The enzyme catalyses Cleaves type-1 transmembrane domains using a catalytic dyad composed of serine and histidine that are contributed by different transmembrane domains.. Functionally, may be involved in regulated intramembrane proteolysis and the subsequent release of functional polypeptides from their membrane anchors. The protein is Rhomboid-related protein 3 (Rhbdl3) of Mus musculus (Mouse).